An 84-amino-acid chain; its full sequence is Putative regulatory protein Dde_2720 (84 aa).

It belongs to the RemA family.

This Oleidesulfovibrio alaskensis (strain ATCC BAA-1058 / DSM 17464 / G20) (Desulfovibrio alaskensis) protein is Putative regulatory protein Dde_2720.